Reading from the N-terminus, the 403-residue chain is Chorismate synthase (403 aa).

Residues Arg40 and Arg46 each coordinate NADP(+). FMN is bound by residues 140–142 and 261–262; these read RSS and QA. The span at 277–298 shows a compositional bias: basic and acidic residues; sequence RRGSEAHDEMVRTDEGVDRETN. Residues 277–307 are disordered; that stretch reads RRGSEAHDEMVRTDEGVDRETNRAGGLEGGM. FMN contacts are provided by residues Gly305, 320–324, and Arg346; that span reads KPIST.

The protein belongs to the chorismate synthase family. Homotetramer. The cofactor is FMNH2.

It catalyses the reaction 5-O-(1-carboxyvinyl)-3-phosphoshikimate = chorismate + phosphate. It functions in the pathway metabolic intermediate biosynthesis; chorismate biosynthesis; chorismate from D-erythrose 4-phosphate and phosphoenolpyruvate: step 7/7. Its function is as follows. Catalyzes the anti-1,4-elimination of the C-3 phosphate and the C-6 proR hydrogen from 5-enolpyruvylshikimate-3-phosphate (EPSP) to yield chorismate, which is the branch point compound that serves as the starting substrate for the three terminal pathways of aromatic amino acid biosynthesis. This reaction introduces a second double bond into the aromatic ring system. This Corynebacterium aurimucosum (strain ATCC 700975 / DSM 44827 / CIP 107346 / CN-1) (Corynebacterium nigricans) protein is Chorismate synthase.